Reading from the N-terminus, the 201-residue chain is Ciliary microtubule inner protein 2C (201 aa).

Belongs to the CIMIP2 family. In terms of assembly, microtubule inner protein component of sperm flagellar doublet microtubules. Expressed in airway epithelial cells.

It is found in the cytoplasm. It localises to the cytoskeleton. Its subcellular location is the cilium axoneme. The protein localises to the flagellum axoneme. Microtubule inner protein (MIP) part of the dynein-decorated doublet microtubules (DMTs) in cilia axoneme, which is required for motile cilia beating. Binds to the intra-tubulin interfaces. The chain is Ciliary microtubule inner protein 2C from Homo sapiens (Human).